A 256-amino-acid chain; its full sequence is Imidazole glycerol phosphate synthase subunit HisF (256 aa).

Catalysis depends on residues Asp11 and Asp130.

Belongs to the HisA/HisF family. As to quaternary structure, heterodimer of HisH and HisF.

The protein resides in the cytoplasm. It catalyses the reaction 5-[(5-phospho-1-deoxy-D-ribulos-1-ylimino)methylamino]-1-(5-phospho-beta-D-ribosyl)imidazole-4-carboxamide + L-glutamine = D-erythro-1-(imidazol-4-yl)glycerol 3-phosphate + 5-amino-1-(5-phospho-beta-D-ribosyl)imidazole-4-carboxamide + L-glutamate + H(+). It functions in the pathway amino-acid biosynthesis; L-histidine biosynthesis; L-histidine from 5-phospho-alpha-D-ribose 1-diphosphate: step 5/9. IGPS catalyzes the conversion of PRFAR and glutamine to IGP, AICAR and glutamate. The HisF subunit catalyzes the cyclization activity that produces IGP and AICAR from PRFAR using the ammonia provided by the HisH subunit. This is Imidazole glycerol phosphate synthase subunit HisF from Methylocella silvestris (strain DSM 15510 / CIP 108128 / LMG 27833 / NCIMB 13906 / BL2).